A 114-amino-acid chain; its full sequence is MNVLLGGLVIFATFVTLCNGSCYVIRHKIVPGETIKECTDLKGNKHPLDSRWRTEDCELCACRDIEISCCSLVSTPVGYDRHNCRKIFNKETCKISVVEKTDPNRPCGVSGWIS.

The N-terminal stretch at 1–20 (MNVLLGGLVIFATFVTLCNG) is a signal peptide. 5 disulfide bridges follow: cysteine 22–cysteine 70, cysteine 38–cysteine 62, cysteine 57–cysteine 93, cysteine 60–cysteine 69, and cysteine 84–cysteine 107.

The protein belongs to the beta-microseminoprotein family.

It localises to the secreted. The sequence is that of Beta-microseminoprotein E1 (MSPE) from Saguinus oedipus (Cotton-top tamarin).